The following is a 334-amino-acid chain: NADH dehydrogenase (ubiquinone) complex I, assembly factor 6 homolog (334 aa).

Residues 1 to 11 (MRRLVRNWNCR) constitute a mitochondrion transit peptide.

The protein belongs to the NDUFAF6 family. As to quaternary structure, associates with mitochondrial complex I assembly intermediates during its biogenesis. Forms a complex including sicily, ND-42 and Hsp83; the complex is necessary to chaperone ND-42 in the cytoplasm before mitochondrial import; the interaction between sicily and ND-42 is direct and occurs preferably between the unprocessed forms in the cytoplasm; the interaction with Hsp83 is direct. Interacts with ND-30; interaction is stronger between the unprocessed forms in the cytoplasm. As to expression, expressed in the ventral nerve cord, larval brain, motor neuron axons, imaginal disks, and muscles (at protein level).

The protein localises to the mitochondrion inner membrane. It localises to the cytoplasm. Its subcellular location is the cytosol. Involved in the assembly of mitochondrial NADH:ubiquinone oxidoreductase complex (Complex I) at early stages. Interacts with cytosolic Hsp90 to chaperone the Complex I subunit ND-42 in the cytoplasm. The chain is NADH dehydrogenase (ubiquinone) complex I, assembly factor 6 homolog from Drosophila melanogaster (Fruit fly).